We begin with the raw amino-acid sequence, 61 residues long: Beta-insect depressant toxin BmKIT2 (61 aa).

Residues Asp1–Gly61 form the LCN-type CS-alpha/beta domain. Intrachain disulfides connect Cys10-Cys60, Cys14-Cys35, Cys21-Cys42, and Cys25-Cys44. Residue Gly61 is modified to Glycine amide.

It belongs to the long (4 C-C) scorpion toxin superfamily. Sodium channel inhibitor family. Beta subfamily. In terms of tissue distribution, expressed by the venom gland.

It is found in the secreted. Its function is as follows. On insects, this depressant beta-toxins cause a transient contraction paralysis followed by a slow flaccid paralysis. They bind voltage-independently at site-4 of sodium channels (Nav) and shift the voltage of activation toward more negative potentials thereby affecting sodium channel activation and promoting spontaneous and repetitive firing. This toxin is active against insects and mammals. It is capable of binding to not only cockroach neuronal membranes, but also rat cerebrocortical and hippocampal synaptosomes. This toxin also has potent peripheral and central suppressive effects on rat nociceptive spontaneous responses, thermal hyperalgesia and spinal c-Fos expression induced by formalin and carrageenan, which may be derived from its modulation on the activity of sodium channels of the neurons. Administration of BmKIT2 into rat brain can also suppress the epileptic seizures significantly. In Olivierus martensii (Manchurian scorpion), this protein is Beta-insect depressant toxin BmKIT2.